A 151-amino-acid polypeptide reads, in one-letter code: MDRKKVVEWWVDRLLINYPVKPVFEVVSFLQEAAEKIVDRALSLYEGKSVDLSDAVDDIMRFLATDRNFGPGDSIRLFCELRDFMADELNLKAEDRLKFGRKFEEILFTAFDAYMACREKIFELRLKEKEADLEMMRKIMDYASRSLSSQD.

This is an uncharacterized protein from Archaeoglobus fulgidus (strain ATCC 49558 / DSM 4304 / JCM 9628 / NBRC 100126 / VC-16).